Here is a 581-residue protein sequence, read N- to C-terminus: Ketol-acid reductoisomerase, chloroplastic (581 aa).

The transit peptide at 1–50 (MAAVTSSCSTAISASSKTLAKPVAASFAPTNLSFSKLSPQSIRARRSITV) directs the protein to the chloroplast. A KARI N-terminal Rossmann domain is found at 92-290 (VRGGRDLFHL…ALGSPFTFAT (199 aa)). NADP(+) is bound by residues 113–120 (GVIGWGSQ), 146–151 (RKGSSS), and 185–189 (SDSAQ). H210 is a catalytic residue. 2 consecutive KARI C-terminal knotted domains span residues 291 to 439 (TLEQ…RPAG) and 440 to 576 (DLGP…RPEL). The Mg(2+) site is built by D299, E303, E476, and E480. Substrate is bound at residue S502.

This sequence belongs to the ketol-acid reductoisomerase family. In terms of assembly, homodimer. Mg(2+) serves as cofactor.

The protein resides in the plastid. It localises to the chloroplast. It catalyses the reaction (2R)-2,3-dihydroxy-3-methylbutanoate + NADP(+) = (2S)-2-acetolactate + NADPH + H(+). The enzyme catalyses (2R,3R)-2,3-dihydroxy-3-methylpentanoate + NADP(+) = (S)-2-ethyl-2-hydroxy-3-oxobutanoate + NADPH + H(+). It functions in the pathway amino-acid biosynthesis; L-isoleucine biosynthesis; L-isoleucine from 2-oxobutanoate: step 2/4. Its pathway is amino-acid biosynthesis; L-valine biosynthesis; L-valine from pyruvate: step 2/4. The protein is Ketol-acid reductoisomerase, chloroplastic (PGAAIR) of Pisum sativum (Garden pea).